We begin with the raw amino-acid sequence, 403 residues long: Nodal homolog (403 aa).

An N-terminal signal peptide occupies residues 1–18 (MAFLTAVLCFGFACMVQG). Positions 19–278 (VPSWLESRIP…RMPGIRRHRR (260 aa)) are excised as a propeptide. 3 N-linked (GlcNAc...) asparagine glycosylation sites follow: asparagine 68, asparagine 133, and asparagine 169. The tract at residues 195-220 (AERGSGMSSAEFLDSPGDSPQYNPHH) is disordered. Disulfide bonds link cysteine 303/cysteine 369, cysteine 332/cysteine 400, and cysteine 336/cysteine 402. N-linked (GlcNAc...) asparagine glycosylation occurs at asparagine 341.

The protein belongs to the TGF-beta family. As to quaternary structure, homodimer; disulfide-linked. Interacts with, and is inhibited by cer1 and gdf10/bmp3b.

The protein resides in the secreted. Its function is as follows. Cooperation and regulatory loops of multiple nodals are essential for mesendoderm patterning in early embryos. Essential for mesoderm formation and axial patterning during embryonic development. Activates the activin-like signaling pathway to induce dorsal and ventral mesoderm in animal cap ectoderm. In addition, also dorsalizes ventral marginal zone (VMZ) tissues during gastrulation. Acts in a downstream signaling cascade via cripto and cer1 to mediate cardiogenesis in embryonic mesoderm. Directs the orientation of the left-right axis by driving the left-specific gene cascade in the left lateral plate mesoderm. The chain is Nodal homolog from Xenopus tropicalis (Western clawed frog).